The following is a 208-amino-acid chain: NADH-quinone oxidoreductase subunit I 2 (208 aa).

2 4Fe-4S ferredoxin-type domains span residues 79-109 (ILVEYGKSRCVVCLRCKRACPVPQLFEIEGK) and 119-148 (SVFNMNMLLCTYCGFCVDACPVDCLYQTDI). 8 residues coordinate [4Fe-4S] cluster: cysteine 88, cysteine 91, cysteine 94, cysteine 98, cysteine 128, cysteine 131, cysteine 134, and cysteine 138.

It belongs to the complex I 23 kDa subunit family. NDH-1 is composed of 14 different subunits. Subunits NuoA, H, J, K, L, M, N constitute the membrane sector of the complex. [4Fe-4S] cluster serves as cofactor.

The protein resides in the cell inner membrane. It carries out the reaction a quinone + NADH + 5 H(+)(in) = a quinol + NAD(+) + 4 H(+)(out). Its function is as follows. NDH-1 shuttles electrons from NADH, via FMN and iron-sulfur (Fe-S) centers, to quinones in the respiratory chain. The immediate electron acceptor for the enzyme in this species is believed to be ubiquinone. Couples the redox reaction to proton translocation (for every two electrons transferred, four hydrogen ions are translocated across the cytoplasmic membrane), and thus conserves the redox energy in a proton gradient. This is NADH-quinone oxidoreductase subunit I 2 from Aquifex aeolicus (strain VF5).